A 121-amino-acid polypeptide reads, in one-letter code: Ubiquitin-related modifier 1 (121 aa).

Position 121 is a 1-thioglycine (G121). A Glycyl lysine isopeptide (Gly-Lys) (interchain with K-? in acceptor proteins) cross-link involves residue G121.

It belongs to the URM1 family. In terms of processing, C-terminal thiocarboxylation occurs in 2 steps, it is first acyl-adenylated (-COAMP) via the hesA/moeB/thiF part of UBA4, then thiocarboxylated (-COSH) via the rhodanese domain of UBA4.

It is found in the cytoplasm. It participates in tRNA modification; 5-methoxycarbonylmethyl-2-thiouridine-tRNA biosynthesis. Acts as a sulfur carrier required for 2-thiolation of mcm(5)S(2)U at tRNA wobble positions of cytosolic tRNA(Lys), tRNA(Glu) and tRNA(Gln). Serves as sulfur donor in tRNA 2-thiolation reaction by being thiocarboxylated (-COSH) at its C-terminus by the MOCS3 homolog UBA4. The sulfur is then transferred to tRNA to form 2-thiolation of mcm(5)S(2)U. Prior mcm(5) tRNA modification by the elongator complex is required for 2-thiolation. Also acts as a ubiquitin-like protein (UBL) that is covalently conjugated via an isopeptide bond to lysine residues of target proteins such as AHP1. The thiocarboxylated form serves as substrate for conjugation and oxidative stress specifically induces the formation of UBL-protein conjugates. The polypeptide is Ubiquitin-related modifier 1 (Ajellomyces capsulatus (strain NAm1 / WU24) (Darling's disease fungus)).